An 88-amino-acid chain; its full sequence is Large ribosomal subunit protein bL31B (88 aa).

Belongs to the bacterial ribosomal protein bL31 family. Type B subfamily. As to quaternary structure, part of the 50S ribosomal subunit.

The protein is Large ribosomal subunit protein bL31B of Glaesserella parasuis serovar 5 (strain SH0165) (Haemophilus parasuis).